We begin with the raw amino-acid sequence, 270 residues long: Bis(5'-nucleosyl)-tetraphosphatase, symmetrical (270 aa).

It belongs to the Ap4A hydrolase family.

It carries out the reaction P(1),P(4)-bis(5'-adenosyl) tetraphosphate + H2O = 2 ADP + 2 H(+). Hydrolyzes diadenosine 5',5'''-P1,P4-tetraphosphate to yield ADP. This is Bis(5'-nucleosyl)-tetraphosphatase, symmetrical from Cellvibrio japonicus (strain Ueda107) (Pseudomonas fluorescens subsp. cellulosa).